Here is a 771-residue protein sequence, read N- to C-terminus: Glucocorticoid receptor (771 aa).

The interval 1–415 is modulating; that stretch reads MDLKESVTSS…STTTGPPPKL (415 aa). Residue threonine 8 is modified to Phosphothreonine. Arginine 22 bears the Omega-N-methylarginine mark. Phosphoserine occurs at positions 44, 133, 199, 207, and 222. A compositionally biased stretch (polar residues) spans 129–172; sequence SRSTSVPENPKNSASAVSGTPTEEFPKTQSDLSSEQENLKSQAG. The interval 129–184 is disordered; it reads SRSTSVPENPKNSASAVSGTPTEEFPKTQSDLSSEQENLKSQAGTNGGNVKFPPDQ. A Glycyl lysine isopeptide (Lys-Gly) (interchain with G-Cter in SUMO2) cross-link involves residue lysine 254. Position 263 is a phosphoserine (serine 263). Residues lysine 273 and lysine 289 each participate in a glycyl lysine isopeptide (Lys-Gly) (interchain with G-Cter in SUMO); alternate cross-link. Glycyl lysine isopeptide (Lys-Gly) (interchain with G-Cter in SUMO2); alternate cross-links involve residues lysine 273 and lysine 289. A phosphoserine mark is found at serine 303 and serine 400. The disordered stretch occupies residues 390–411; that stretch reads SSPGLRPDVSSPPSSSSTTTGP. The segment covering 400–409 has biased composition (low complexity); sequence SPPSSSSTTT. Lysine 414 participates in a covalent cross-link: Glycyl lysine isopeptide (Lys-Gly) (interchain with G-Cter in ubiquitin). 2 NR C4-type zinc fingers span residues 416–436 and 452–476; these read CLVC…CGSC and CAGR…YRKC. Residues 416 to 481 constitute a DNA-binding region (nuclear receptor); the sequence is CLVCSDELSG…RYRKCLQAGM (66 aa). 4 positions are modified to N6-acetyllysine: lysine 475, lysine 487, lysine 489, and lysine 490. The interaction with CLOCK stretch occupies residues 480 to 771; it reads GMNLQARKTK…DIKKLLFHQK (292 aa). Positions 482 to 517 are hinge; it reads NLQARKTKKKIKGIQQATTGVSQNTSENPNKTIVPA. Positions 518–752 constitute an NR LBD domain; that stretch reads TLPQLTPTLV…FPEMLAEIIT (235 aa). The segment at 526–691 is interaction with CRY1; sequence LVSLLEVIEP…EIRMTYIKEL (166 aa). Lysine 697 is covalently cross-linked (Glycyl lysine isopeptide (Lys-Gly) (interchain with G-Cter in SUMO)).

Belongs to the nuclear hormone receptor family. NR3 subfamily. Heteromultimeric cytoplasmic complex with HSP90AA1, HSPA1A/HSPA1B, and FKBP5 or another immunophilin such as PPID, STIP1, or the immunophilin homolog PPP5C. Upon ligand binding FKBP5 dissociates from the complex and FKBP4 takes its place, thereby linking the complex to dynein and mediating transport to the nucleus, where the complex dissociates. Probably forms a complex composed of chaperones HSP90 and HSP70, co-chaperones CDC37, PPP5C, TSC1 and client protein TSC2, CDK4, AKT, RAF1 and NR3C1; this complex does not contain co-chaperones STIP1/HOP and PTGES3/p23. Directly interacts with UNC45A. Binds to DNA as a homodimer, and as heterodimer with NR3C2 or the retinoid X receptor. Binds STAT5A and STAT5B homodimers and heterodimers. Interacts with NRIP1, POU2F1, POU2F2 and TRIM28. Interacts with several coactivator complexes, including the SMARCA4 complex, CREBBP/EP300, TADA2L (Ada complex) and p160 coactivators such as NCOA2 and NCOA6. Interaction with BAG1 inhibits transactivation. Interacts with HEXIM1 and TGFB1I1. Interacts with NCOA1. Interacts with NCOA3, SMARCA4, SMARCC1, SMARCD1, and SMARCE1. Interacts with CLOCK, CRY1 and CRY2 in a ligand-dependent fashion. Interacts with CIART. Interacts with RWDD3. Interacts with UBE2I/UBC9 and this interaction is enhanced in the presence of RWDD3. Interacts with GRIP1. Interacts with NR4A3 (via nuclear receptor DNA-binding domain), represses transcription activity of NR4A3 on the POMC promoter Nur response element (NurRE). Directly interacts with PNRC2 to attract and form a complex with UPF1 and DCP1A; the interaction leads to rapid mRNA degradation. Interacts with GSK3B. Interacts with FNIP1 and FNIP2. Interacts (via C-terminus) with HNRNPU (via C-terminus). Interacts with MCM3AP. Interacts (via domain NR LBD) with HSP90AA1 and HSP90AB1. In the absence of hormonal ligand, interacts with TACC1. Interacts (via NR LBD domain) with ZNF764 (via KRAB domain); the interaction regulates transcription factor activity of NR3C1 by directing its actions toward certain biologic pathways. Acetylation by CLOCK reduces its binding to glucocorticoid response elements and its transcriptional activity. In terms of processing, increased proteasome-mediated degradation in response to glucocorticoids. Post-translationally, phosphorylated in the absence of hormone; becomes hyperphosphorylated in the presence of glucocorticoid. The Ser-199, Ser-222 and Ser-400-phosphorylated forms are mainly cytoplasmic, and the Ser-207-phosphorylated form is nuclear. Phosphorylation at Ser-207 increases transcriptional activity. Phosphorylation at Ser-199, Ser-222 and Ser-400 decreases signaling capacity. Phosphorylation at Ser-400 may protect from glucocorticoid-induced apoptosis. Phosphorylation at Ser-199 and Ser-207 is not required in regulation of chromosome segregation. May be dephosphorylated by PPP5C, attenuates NR3C1 action. Ubiquitinated by UBR5, leading to its degradation: UBR5 specifically recognizes and binds ligand-bound NR3C1 when it is not associated with coactivators (NCOAs). In presence of NCOAs, the UBR5-degron is not accessible, preventing its ubiquitination and degradation. In terms of processing, sumoylation at Lys-273 and Lys-289 negatively regulates its transcriptional activity. Sumoylation at Lys-697 positively regulates its transcriptional activity in the presence of RWDD3. Sumoylation at Lys-273 and Lys-289 is dispensable whereas sumoylation at Lys-697 is critical for the stimulatory effect of RWDD3 on its transcriptional activity. Heat shock increases sumoylation in a RWDD3-dependent manner.

The protein localises to the cytoplasm. It localises to the nucleus. The protein resides in the mitochondrion. It is found in the cytoskeleton. Its subcellular location is the spindle. The protein localises to the microtubule organizing center. It localises to the centrosome. The protein resides in the chromosome. It is found in the nucleoplasm. Functionally, receptor for glucocorticoids (GC). Has a dual mode of action: as a transcription factor that binds to glucocorticoid response elements (GRE), both for nuclear and mitochondrial DNA, and as a modulator of other transcription factors. Affects inflammatory responses, cellular proliferation and differentiation in target tissues. Involved in chromatin remodeling. Plays a role in rapid mRNA degradation by binding to the 5' UTR of target mRNAs and interacting with PNRC2 in a ligand-dependent manner which recruits the RNA helicase UPF1 and the mRNA-decapping enzyme DCP1A, leading to RNA decay. Could act as a coactivator for STAT5-dependent transcription upon growth hormone (GH) stimulation and could reveal an essential role of hepatic GR in the control of body growth. Mediates glucocorticoid-induced apoptosis. Promotes accurate chromosome segregation during mitosis. May act as a tumor suppressor. May play a negative role in adipogenesis through the regulation of lipolytic and antilipogenic gene expression. This Cavia porcellus (Guinea pig) protein is Glucocorticoid receptor (NR3C1).